A 434-amino-acid chain; its full sequence is D-amino acid dehydrogenase (434 aa).

Residue 3 to 17 (VIVLGSGVIGTTTAY) participates in FAD binding.

The protein belongs to the DadA oxidoreductase family. FAD is required as a cofactor.

The catalysed reaction is a D-alpha-amino acid + A + H2O = a 2-oxocarboxylate + AH2 + NH4(+). Oxidative deamination of D-amino acids. In Bordetella bronchiseptica (strain ATCC BAA-588 / NCTC 13252 / RB50) (Alcaligenes bronchisepticus), this protein is D-amino acid dehydrogenase.